We begin with the raw amino-acid sequence, 394 residues long: Elongation factor Tu 2 (394 aa).

The tr-type G domain maps to 10 to 204 (KPHVNVGTIG…YLDTYIPEPE (195 aa)). The G1 stretch occupies residues 19 to 26 (GHVDHGKT). Position 19 to 26 (19 to 26 (GHVDHGKT)) interacts with GTP. Thr26 provides a ligand contact to Mg(2+). Residues 60 to 64 (GITIN) form a G2 region. Positions 81–84 (DCPG) are G3. GTP-binding positions include 81-85 (DCPGH) and 136-139 (NKCD). A G4 region spans residues 136–139 (NKCD). The segment at 174-176 (SAL) is G5.

This sequence belongs to the TRAFAC class translation factor GTPase superfamily. Classic translation factor GTPase family. EF-Tu/EF-1A subfamily. Monomer.

The protein localises to the cytoplasm. The enzyme catalyses GTP + H2O = GDP + phosphate + H(+). Functionally, GTP hydrolase that promotes the GTP-dependent binding of aminoacyl-tRNA to the A-site of ribosomes during protein biosynthesis. This Yersinia enterocolitica serotype O:8 / biotype 1B (strain NCTC 13174 / 8081) protein is Elongation factor Tu 2.